The chain runs to 251 residues: Protein unc-119 homolog B (251 aa).

Residues 1-28 (MSGSNPKAAAAASAAGPGGLVAGKEEKK) are disordered. N-acetylserine is present on Ser2. Lys24 carries the N6-acetyllysine modification. A tetradecanoate-binding site is contributed by Tyr142.

It belongs to the PDE6D/unc-119 family. Found in a complex with ARL3, RP2 and UNC119B; RP2 induces hydrolysis of GTP ARL3 in the complex, leading to the release of UNC119B. Interacts with NPHP3 (when myristoylated). Interacts with CYS1 (when myristoylated). Interacts with MACIR; interaction only takes place when UNC119B is not liganded with myristoylated proteins.

Its subcellular location is the cell projection. The protein resides in the cilium. In terms of biological role, myristoyl-binding protein that acts as a cargo adapter: specifically binds the myristoyl moiety of a subset of N-terminally myristoylated proteins and is required for their localization. Binds myristoylated NPHP3 and plays a key role in localization of NPHP3 to the primary cilium membrane. Does not bind all myristoylated proteins. Probably plays a role in trafficking proteins in photoreceptor cells. In Homo sapiens (Human), this protein is Protein unc-119 homolog B (UNC119B).